The primary structure comprises 1691 residues: Protein TIC 214 (1691 aa).

6 helical membrane-spanning segments follow: residues Met-19–Leu-39, Val-60–Leu-80, Leu-84–Pro-104, Leu-123–Leu-143, Thr-158–Phe-178, and Phe-200–Ala-220. Residues Glu-819 to Lys-839 are disordered.

The protein belongs to the TIC214 family. Part of the Tic complex.

The protein localises to the plastid. It is found in the chloroplast inner membrane. Its function is as follows. Involved in protein precursor import into chloroplasts. May be part of an intermediate translocation complex acting as a protein-conducting channel at the inner envelope. In Adiantum capillus-veneris (Maidenhair fern), this protein is Protein TIC 214.